The following is a 237-amino-acid chain: CD63 antigen (237 aa).

At 1-11 (MAVEGGMKCVK) the chain is on the cytoplasmic side. A helical membrane pass occupies residues 12-32 (FLLYVLLLVFCACAVGLIAVG). At 33 to 51 (VGTHLVLNQTITHGATPSF) the chain is on the extracellular side. N-linked (GlcNAc...) asparagine glycosylation is present at N40. A helical transmembrane segment spans residues 52–72 (LLPVVIIAVGAFLFLVAFVGC). The Cytoplasmic portion of the chain corresponds to 73–81 (CGACKENYC). Residues 82–102 (LMITFAIFLSLIMLVEVAAAI) form a helical membrane-spanning segment. The Extracellular portion of the chain corresponds to 103-202 (AGYVFRDKVR…KIAAWLRKNV (100 aa)). 3 N-linked (GlcNAc...) asparagine glycosylation sites follow: N130, N150, and N171. Residues 203–223 (LVVAAAALGIAFVEILGIVLA) form a helical membrane-spanning segment. Topologically, residues 224-237 (CCLVKSIRSGYEVM) are cytoplasmic. Residues 233-237 (GYEVM) carry the Lysosomal targeting motif motif.

Belongs to the tetraspanin (TM4SF) family. Interacts with TIMP1 and ITGB1 and recruits TIMP1 to ITGB1. Interacts with CD9. Identified in a complex with CD9 and ITGB3. Interacts with PMEL. Interacts with KDR/VEGFR2; identified in a complex with ITGB1 and KDR/VEGFR2 and is required to recruit KDR to ITGB1 complexes. Interacts with SYT7. In terms of processing, palmitoylated at a low, basal level in unstimulated platelets. The level of palmitoylation increases when platelets are activated by thrombin (in vitro).

The protein resides in the cell membrane. The protein localises to the lysosome membrane. It is found in the late endosome membrane. Its subcellular location is the endosome. It localises to the multivesicular body. The protein resides in the melanosome. The protein localises to the secreted. It is found in the extracellular exosome. Its subcellular location is the cell surface. Functionally, functions as a cell surface receptor for TIMP1 and plays a role in the activation of cellular signaling cascades. Plays a role in the activation of ITGB1 and integrin signaling, leading to the activation of AKT, FAK/PTK2 and MAP kinases. Promotes cell survival, reorganization of the actin cytoskeleton, cell adhesion, spreading and migration, via its role in the activation of AKT and FAK/PTK2. Plays a role in VEGFA signaling via its role in regulating the internalization of KDR/VEGFR2. Plays a role in intracellular vesicular transport processes, and is required for normal trafficking of the PMEL luminal domain that is essential for the development and maturation of melanocytes. Plays a role in the adhesion of leukocytes onto endothelial cells via its role in the regulation of SELP trafficking. May play a role in mast cell degranulation in response to Ms4a2/FceRI stimulation, but not in mast cell degranulation in response to other stimuli. This chain is CD63 antigen (CD63), found in Bos taurus (Bovine).